Reading from the N-terminus, the 160-residue chain is Fimbrial protein (160 aa).

Residues 1 to 7 constitute a propeptide, leader sequence; the sequence is MKSLQKG. At phenylalanine 8 the chain carries N-methylphenylalanine. Residues 8–28 form a helical membrane-spanning segment; the sequence is FTLIELMIVVAIIGILAAFAI.

This sequence belongs to the N-Me-Phe pilin family. As to quaternary structure, the pili are polar flexible filaments of about 5.4 nanometers diameter and 2.5 micrometers average length; they consist of only a single polypeptide chain arranged in a helical configuration of five subunits per turn in the assembled pilus.

The protein localises to the fimbrium. The protein resides in the membrane. This is Fimbrial protein (fimA) from Dichelobacter nodosus (Bacteroides nodosus).